The chain runs to 209 residues: Uracil phosphoribosyltransferase (209 aa).

5-phospho-alpha-D-ribose 1-diphosphate-binding positions include Arg-79, Arg-104, and Asp-131–Ser-139. Residues Ile-194 and Gly-199–Ala-201 each bind uracil. 5-phospho-alpha-D-ribose 1-diphosphate is bound at residue Asp-200.

Belongs to the UPRTase family. Requires Mg(2+) as cofactor.

It catalyses the reaction UMP + diphosphate = 5-phospho-alpha-D-ribose 1-diphosphate + uracil. It functions in the pathway pyrimidine metabolism; UMP biosynthesis via salvage pathway; UMP from uracil: step 1/1. Allosterically activated by GTP. In terms of biological role, catalyzes the conversion of uracil and 5-phospho-alpha-D-ribose 1-diphosphate (PRPP) to UMP and diphosphate. The protein is Uracil phosphoribosyltransferase of Streptococcus suis (strain 05ZYH33).